Consider the following 71-residue polypeptide: MPIVKVRENEPFDVALRRFKRSCEKAGVLSEVRRREFFEKPTWERKRKKAAAKKRHLKKLARENARRVKLY.

The protein belongs to the bacterial ribosomal protein bS21 family.

The sequence is that of Small ribosomal subunit protein bS21 from Alteromonas mediterranea (strain DSM 17117 / CIP 110805 / LMG 28347 / Deep ecotype).